The chain runs to 275 residues: NH(3)-dependent NAD(+) synthetase (275 aa).

46 to 53 (GISGGQDS) is a binding site for ATP. D52 is a binding site for Mg(2+). Residue R140 participates in deamido-NAD(+) binding. T160 is a binding site for ATP. E165 contributes to the Mg(2+) binding site. Residues K173 and D180 each contribute to the deamido-NAD(+) site. ATP contacts are provided by K189 and T211. Position 260 to 261 (260 to 261 (HK)) interacts with deamido-NAD(+).

This sequence belongs to the NAD synthetase family. Homodimer.

The catalysed reaction is deamido-NAD(+) + NH4(+) + ATP = AMP + diphosphate + NAD(+) + H(+). It functions in the pathway cofactor biosynthesis; NAD(+) biosynthesis; NAD(+) from deamido-NAD(+) (ammonia route): step 1/1. Functionally, catalyzes the ATP-dependent amidation of deamido-NAD to form NAD. Uses ammonia as a nitrogen source. The sequence is that of NH(3)-dependent NAD(+) synthetase from Escherichia coli O8 (strain IAI1).